The following is a 186-amino-acid chain: ATP-dependent protease subunit HslV (186 aa).

The active site involves T13. A167, C170, and T173 together coordinate Na(+).

It belongs to the peptidase T1B family. HslV subfamily. A double ring-shaped homohexamer of HslV is capped on each side by a ring-shaped HslU homohexamer. The assembly of the HslU/HslV complex is dependent on binding of ATP.

The protein localises to the cytoplasm. It carries out the reaction ATP-dependent cleavage of peptide bonds with broad specificity.. Allosterically activated by HslU binding. Functionally, protease subunit of a proteasome-like degradation complex believed to be a general protein degrading machinery. In Allorhizobium ampelinum (strain ATCC BAA-846 / DSM 112012 / S4) (Agrobacterium vitis (strain S4)), this protein is ATP-dependent protease subunit HslV.